We begin with the raw amino-acid sequence, 107 residues long: MSLLRFAILCIIFVSLFGVHECFRGEKINVPAHPCYHTLCGSMIRNCYCCLGKKFDYCSPNQQNCLFRCEEVNRIPDFPKTNGVSKGLGPPIYLFFLGQFIYFVLGL.

A signal peptide spans 1–22 (MSLLRFAILCIIFVSLFGVHEC). Intrachain disulfides connect C35/C49, C40/C69, C47/C65, and C50/C58. A helical membrane pass occupies residues 87 to 107 (GLGPPIYLFFLGQFIYFVLGL).

It belongs to the MEG family. Expressed in flowers.

Its subcellular location is the membrane. This is EMBRYO SURROUNDING FACTOR 1-like protein 5 (ESFL5) from Arabidopsis thaliana (Mouse-ear cress).